A 126-amino-acid chain; its full sequence is Penicillinase repressor (126 aa).

The segment at residues 7-71 is a DNA-binding region (H-T-H motif); the sequence is EISMAEWDVM…KSENIYFYSS (65 aa). The segment at 74–126 is important for dimerization; the sequence is KEDDIKMKTAKTFLNKLYGGDMKSLVLNFAKNEELNNKEIEELRDILNDISKK.

It belongs to the BlaI transcriptional regulatory family. As to quaternary structure, homodimer. Upon exposure to beta-lactams, the protease BlaR1 is activated and cleaves BlaI at a single site. This proteolytic cleavage impairs dimerization and abolishes repressor activity.

Its subcellular location is the cytoplasm. In terms of biological role, transcriptional repressor that constitutively blocks expression of beta-lactamase. Binds DNA as a dimer. The chain is Penicillinase repressor (blaI) from Staphylococcus aureus.